The sequence spans 360 residues: Peptide chain release factor 1 (360 aa).

Glutamine 235 is modified (N5-methylglutamine).

Belongs to the prokaryotic/mitochondrial release factor family. In terms of processing, methylated by PrmC. Methylation increases the termination efficiency of RF1.

It is found in the cytoplasm. Functionally, peptide chain release factor 1 directs the termination of translation in response to the peptide chain termination codons UAG and UAA. The protein is Peptide chain release factor 1 of Burkholderia cenocepacia (strain ATCC BAA-245 / DSM 16553 / LMG 16656 / NCTC 13227 / J2315 / CF5610) (Burkholderia cepacia (strain J2315)).